Here is a 124-residue protein sequence, read N- to C-terminus: Small ribosomal subunit protein uS12c (124 aa).

Residues 104–124 (SGGVKDRTQRRSKYGVKKPKS) are disordered. Residues 113–124 (RRSKYGVKKPKS) are compositionally biased toward basic residues.

This sequence belongs to the universal ribosomal protein uS12 family. Part of the 30S ribosomal subunit.

Its subcellular location is the plastid. It localises to the chloroplast. Functionally, with S4 and S5 plays an important role in translational accuracy. Located at the interface of the 30S and 50S subunits. In Thalassiosira pseudonana (Marine diatom), this protein is Small ribosomal subunit protein uS12c (rps12).